A 147-amino-acid polypeptide reads, in one-letter code: Large ribosomal subunit protein uL15 (147 aa).

Positions 1–15 are enriched in basic residues; that stretch reads MTDRVKKTRKLRGHV. The interval 1 to 34 is disordered; the sequence is MTDRVKKTRKLRGHVSHGYGRVGKHRKHSGGRGL.

Belongs to the universal ribosomal protein uL15 family.

This Encephalitozoon cuniculi (strain GB-M1) (Microsporidian parasite) protein is Large ribosomal subunit protein uL15 (RPL27A).